Consider the following 452-residue polypeptide: Scaffold protein ILK (452 aa).

Met-1 carries the post-translational modification N-acetylmethionine. ANK repeat units follow at residues 2–30 (DDIF…LNQG), 31–63 (DDHG…INVM), 64–96 (NRGD…INAV), 97–129 (NEHG…VSIC), and 130–174 (NKYG…GTTR). The interval 33-139 (HGFSPLHWAC…NKYGEMPVDK (107 aa)) is interaction with LIMS1. The residue at position 173 (Thr-173) is a Phosphothreonine; by PAK1. Residues 180–212 (GTLNKHSGIDFKQLNFLTKLNENHSGELWKGRW) are PH-like; mediates interaction with TGFB1I1. Phosphoserine is present on Ser-186. A Protein kinase domain is found at 193 to 446 (LNFLTKLNEN…PKFDMIVPIL (254 aa)). ATP is bound by residues Asn-200, Asn-202, His-203, Ser-204, and Lys-220. Phosphoserine; by PAK1 is present on Ser-246. Residues His-270, Met-272, and Asn-279 each contribute to the ATP site. Position 339 (Asp-339) interacts with Mg(2+). ATP is bound at residue Lys-341. The short motif at 363-371 (KKPEDTNRR) is the Nuclear localization signal element. The residue at position 426 (Lys-426) is an N6-acetyllysine.

The protein belongs to the protein kinase superfamily. TKL Ser/Thr protein kinase family. Component of the heterotrimeric IPP (ILK-PINCH-PARVIN) complex composed of ILK, LIMS1/PINCH and PARVA; the complex binds to F-actin via the C-terminal tail of LIMS1 and the N-terminal region of PARVA, promoting F-actin filament bundling. Formation of the IPP complex is dependent on protein kinase C and precedes integrin-mediated cell adhesion and spreading. ILK also interacts with LIMS2/PINCH2 and with PARVB and PARVG which may substitute for LIMS1 and PARVA in the IPP complex; PARVA and PARVB compete for the same binding site. Interaction with PARVG promotes the establishment of cell polarity required for leukocyte migration. Interacts with the cytoplasmic domain of integrin ITGB1 and may also interact with integrins ITGB2, ITGB3 and/or ITGB5. Interacts probably also with TGFB1I1. Interacts (via ANK repeats) with EPHA1 (via SAM domain); stimulated by EFNA1 but independent of the kinase activity of EPHA1. Interacts with FERMT2. Interacts with LIMD2; leading to activate the protein kinase activity. Interacts with PXN/PAXILLIN (via LD motif 4). Interacts with CCDC25 (via cytoplasmic region); initiating the ILK-PARVB cascade to induce cytoskeleton rearrangement and directional migration of cells. Interacts with IQGAP1; the interaction is required for localization of IQGAP1 to the cell cortex. Post-translationally, phosphorylation by PAK1 modulates ILK subcellular location by promoting its nuclear export. Highly expressed in heart followed by skeletal muscle, pancreas and kidney. Weakly expressed in placenta, lung and liver.

It is found in the cell junction. The protein localises to the focal adhesion. The protein resides in the cell membrane. Its subcellular location is the cell projection. It localises to the lamellipodium. It is found in the cytoplasm. The protein localises to the myofibril. The protein resides in the sarcomere. Its subcellular location is the nucleus. It localises to the cytoskeleton. It is found in the microtubule organizing center. The protein localises to the centrosome. The protein resides in the cell cortex. Functionally, scaffold protein which mediates protein-protein interactions during a range of cellular events including focal adhesion assembly, cell adhesion and cell migration. Regulates integrin-mediated signal transduction by contributing to inside-out integrin activation. Recruits PARVA and LIMS1/PITCH to form the heterotrimeric IPP (ILK-PINCH-PARVIN) complex which binds to F-actin via the C-terminal tail of LIMS1 and the N-terminal region of PARVA, promoting F-actin filament bundling, a process required to generate force for actin cytoskeleton reorganization and subsequent dynamic cell adhesion events such as cell spreading and migration. Binding to PARVA promotes effective assembly of ILK into focal adhesions while PARVA-bound ILK can simultaneously engage integrin-beta cytoplasmic tails to mediate cell adhesion. Plays a role with PARVG in promoting the cell adhesion and spreading of leukocytes. Acts as an upstream effector of both AKT1/PKB and GSK3. Mediates trafficking of caveolae to the cell surface in an ITGB1-dependent manner by promoting the recruitment of IQGAP1 to the cell cortex which cooperates with its effector DIAPH1 to locally stabilize microtubules and allow stable insertion of caveolae into the plasma membrane. Required for the maintenance of mitotic spindle integrity by promoting phosphorylation of TACC3 by AURKA. Associates with chromatin and may act as a negative regulator of transcription when located in the nucleus. The protein is Scaffold protein ILK of Homo sapiens (Human).